A 425-amino-acid polypeptide reads, in one-letter code: Bifunctional phosphoribosylaminoimidazole carboxylase/phosphoribosylaminoimidazole succinocarboxamide synthetase (425 aa).

Alanine 2 carries the N-acetylalanine modification. The tract at residues 2 to 260 (ATAEVLNIGR…WVADRVELLL (259 aa)) is SAICAR synthetase domain. Position 22 is a phosphotyrosine (tyrosine 22). Serine 27 carries the phosphoserine modification. An N6-acetyllysine modification is found at lysine 36. Serine 107 bears the Phosphoserine mark. Threonine 238 is modified (phosphothreonine). An N6-acetyllysine modification is found at lysine 247. The segment at 261–266 (KSNSQC) is linker. The AIR carboxylase domain stretch occupies residues 267 to 425 (RVVVLMGSTS…ADKKIRECNL (159 aa)). The residue at position 274 (serine 274) is a Phosphoserine. A CO2-binding site is contributed by serine 332.

The protein in the N-terminal section; belongs to the SAICAR synthetase family. This sequence in the C-terminal section; belongs to the AIR carboxylase family. Class II subfamily. In terms of assembly, homooctamer.

The catalysed reaction is 5-amino-1-(5-phospho-D-ribosyl)imidazole-4-carboxylate + L-aspartate + ATP = (2S)-2-[5-amino-1-(5-phospho-beta-D-ribosyl)imidazole-4-carboxamido]succinate + ADP + phosphate + 2 H(+). It carries out the reaction 5-amino-1-(5-phospho-D-ribosyl)imidazole-4-carboxylate + H(+) = 5-amino-1-(5-phospho-beta-D-ribosyl)imidazole + CO2. It participates in purine metabolism; IMP biosynthesis via de novo pathway; 5-amino-1-(5-phospho-D-ribosyl)imidazole-4-carboxamide from 5-amino-1-(5-phospho-D-ribosyl)imidazole-4-carboxylate: step 1/2. The protein operates within purine metabolism; IMP biosynthesis via de novo pathway; 5-amino-1-(5-phospho-D-ribosyl)imidazole-4-carboxylate from 5-amino-1-(5-phospho-D-ribosyl)imidazole (carboxylase route): step 1/1. Its function is as follows. Bifunctional phosphoribosylaminoimidazole carboxylase and phosphoribosylaminoimidazole succinocarboxamide synthetase catalyzing two reactions of the de novo purine biosynthetic pathway. The chain is Bifunctional phosphoribosylaminoimidazole carboxylase/phosphoribosylaminoimidazole succinocarboxamide synthetase from Rattus norvegicus (Rat).